The primary structure comprises 218 residues: Protein GrpE (218 aa).

Composition is skewed to basic and acidic residues over residues 1-13 (MSKN…HQNN) and 20-32 (VDKK…NKQE). The disordered stretch occupies residues 1–32 (MSKNNENIKHQNNDKVNNQVDKKETKNHNKQE).

This sequence belongs to the GrpE family. As to quaternary structure, homodimer.

The protein localises to the cytoplasm. Functionally, participates actively in the response to hyperosmotic and heat shock by preventing the aggregation of stress-denatured proteins, in association with DnaK and GrpE. It is the nucleotide exchange factor for DnaK and may function as a thermosensor. Unfolded proteins bind initially to DnaJ; upon interaction with the DnaJ-bound protein, DnaK hydrolyzes its bound ATP, resulting in the formation of a stable complex. GrpE releases ADP from DnaK; ATP binding to DnaK triggers the release of the substrate protein, thus completing the reaction cycle. Several rounds of ATP-dependent interactions between DnaJ, DnaK and GrpE are required for fully efficient folding. This chain is Protein GrpE, found in Ureaplasma parvum serovar 3 (strain ATCC 27815 / 27 / NCTC 11736).